The chain runs to 522 residues: Echinocystic acid 23-monooxygenase (522 aa).

Residues 4–24 (LPYIATSIACIVILRWALNMM) traverse the membrane as a helical; Signal-anchor for type II membrane protein segment. Residue Asn-190 is glycosylated (N-linked (GlcNAc...) asparagine). Position 470 (Cys-470) interacts with heme.

It belongs to the cytochrome P450 family. Requires heme as cofactor. As to expression, mainly expressed in flowers and flower buds, to a lesser extent in young leaves and, at low levels, in old leaves, stems and roots.

The protein resides in the membrane. Its pathway is secondary metabolite biosynthesis; terpenoid biosynthesis. Functionally, component of the oleanane-type triterpene saponins (e.g. saponarioside A and saponarioside B) biosynthetic pathway, leading to the production of natural products with detergent properties used as traditional sources of soap. An oxidoreductase that facilitates the oxidation of the methyl group to a carboxyl group at the C-23 position of echinocystic acid, resulting in the formation of quillaic acid (QA). The protein is Echinocystic acid 23-monooxygenase of Saponaria officinalis (Common soapwort).